The chain runs to 291 residues: Glycine--tRNA ligase alpha subunit (291 aa).

The protein belongs to the class-II aminoacyl-tRNA synthetase family. As to quaternary structure, tetramer of two alpha and two beta subunits.

The protein resides in the cytoplasm. The enzyme catalyses tRNA(Gly) + glycine + ATP = glycyl-tRNA(Gly) + AMP + diphosphate. This Nitratidesulfovibrio vulgaris (strain DSM 19637 / Miyazaki F) (Desulfovibrio vulgaris) protein is Glycine--tRNA ligase alpha subunit.